The primary structure comprises 683 residues: Synaptic vesicle glycoprotein 2B (683 aa).

A compositionally biased stretch (basic and acidic residues) spans 1 to 10 (MDDYRYRDNY). Residues 1–73 (MDDYRYRDNY…TKMAPSRADG (73 aa)) are disordered. The Cytoplasmic portion of the chain corresponds to 1–110 (MDDYRYRDNY…ECGHGRFQWT (110 aa)). Ser33 carries the phosphoserine modification. Residue Thr36 is modified to Phosphothreonine. Residues 111–131 (LFFVLGLALMADGVEIFVVSF) traverse the membrane as a helical segment. Over 132–148 (ALPSAEKDMCLSSSKKG) the chain is Extracellular. A helical transmembrane segment spans residues 149–169 (MLGLIVYLGMMAGAFILGGLA). Residues 170–182 (DKLGRKKVLSMSL) lie on the Cytoplasmic side of the membrane. The helical transmembrane segment at 183–203 (AINASFASLSSFVQGYGAFLF) threads the bilayer. At 204 to 205 (CR) the chain is on the extracellular side. Residues 206 to 226 (LISGIGIGGSLPIVFAYFSEF) traverse the membrane as a helical segment. The Cytoplasmic portion of the chain corresponds to 227 to 237 (LSREKRGEHLS). A helical membrane pass occupies residues 238 to 258 (WLGIFWMTGGIYASAMAWSII). Residues 259–277 (PHYGWGFSMGTNYHFHSWR) are Extracellular-facing. Residues 278-298 (VFVIVCALPATVSMVALKFMP) traverse the membrane as a helical segment. Residues 299–390 (ESPRFLLEMG…CVMGPYRMNT (92 aa)) are Cytoplasmic-facing. The chain crosses the membrane as a helical span at residues 391-411 (LILAVVWFTMALSYYGLTVWF). Topologically, residues 412–535 (PDMIRYFQDE…CHMDFEEDND (124 aa)) are extracellular. Tyr423 carries the post-translational modification Phosphotyrosine. N-linked (GlcNAc...) asparagine glycosylation is found at Asn441, Asn491, and Asn516. A helical membrane pass occupies residues 536–556 (FLIYLVSFLGSLSVLPGNIIS). Over 557-565 (ALLMDRIGR) the chain is Cytoplasmic. The chain crosses the membrane as a helical span at residues 566–586 (LKMIGGSMLISAVCCFFLFFG). Residues 587–592 (NSESAM) are Extracellular-facing. The helical transmembrane segment at 593 to 613 (IGWQCLFCGTSIAAWNALDVI) threads the bilayer. Topologically, residues 614-626 (TVELYPTNQRATA) are cytoplasmic. The chain crosses the membrane as a helical span at residues 627–649 (FGILNGLCKFGAILGNTIFASFV). Residues 650–653 (GITK) lie on the Extracellular side of the membrane. Residues 654-672 (VVPILLAAASLVGGGLIAL) traverse the membrane as a helical segment. Topologically, residues 673 to 683 (RLPETREQVLM) are cytoplasmic.

This sequence belongs to the major facilitator superfamily. In terms of assembly, interacts with SYT1 in a calcium-independent manner. Forms a complex with SYT1, syntaxin-1 and SNAP25. (Microbial infection) Interacts with C.botulinum neurotoxin type A (BoNT/A, botA). As to quaternary structure, (Microbial infection) Interacts with C.botulinum neurotoxin type D (BoNT/D, botD). No evidence for its interaction with BoNT/D has also been published. N-glycosylated. Post-translationally, the N-terminal cytoplasmic domain is phosphorylated by CK1. In terms of tissue distribution, expressed in ribbon synapses of the retina (at protein level). Expressed in diaphragm motor nerve terminals (at protein level). Expressed in hippocampus neurons (at protein level).

The protein resides in the cytoplasmic vesicle. It is found in the secretory vesicle. Its subcellular location is the synaptic vesicle membrane. It localises to the acrosome. Probably plays a role in the control of regulated secretion in neural and endocrine cells. Its function is as follows. (Microbial infection) Receptor for C.botulinum neurotoxin type A (BoNT/A, botA); the toxin probably binds via extracellular loop 4. Functionally, (Microbial infection) Possible receptor for C.botulinum neurotoxin type D (BoNT/D, botD). Not a receptor for C.botulinum neurotoxin type D (BoNT/D, botD). In terms of biological role, (Microbial infection) Receptor for C.botulinum neurotoxin type E (BoNT/E); the toxin probably binds via extracellular loop 4. It probably requires glycosylation of Asn-516. The polypeptide is Synaptic vesicle glycoprotein 2B (Sv2b) (Mus musculus (Mouse)).